The sequence spans 98 residues: DNA-binding protein HU (98 aa).

The protein belongs to the bacterial histone-like protein family. As to quaternary structure, homodimer.

Functionally, histone-like DNA-binding protein which is capable of wrapping DNA to stabilize it, and thus to prevent its denaturation under extreme environmental conditions. The chain is DNA-binding protein HU (hup) from Campylobacter jejuni subsp. jejuni serotype O:2 (strain ATCC 700819 / NCTC 11168).